The chain runs to 501 residues: Myosin heavy chain, embryonic smooth muscle isoform (501 aa).

Residues 1 to 457 (REAREKETKA…TLKNRLRRGG (457 aa)) adopt a coiled-coil conformation. The interval 1-501 (REAREKETKA…VNETQPPQSE (501 aa)) is rodlike tail (S2 and LMM domains). Disordered stretches follow at residues 182-202 (YQRELEEARGSRDEIFAQSKE), 221-254 (LASSERARRHAEQERDELADEIANSASGKSALLD), and 397-501 (MEKA…PQSE). The span at 223-233 (SSERARRHAEQ) shows a compositional bias: basic and acidic residues. Residues 492–501 (VNETQPPQSE) are compositionally biased toward polar residues.

As to quaternary structure, muscle myosin is a hexameric protein that consists of 2 heavy chain subunits (MHC), 2 alkali light chain subunits (MLC) and 2 regulatory light chain subunits (MLC-2).

It localises to the cytoplasm. Its subcellular location is the myofibril. Functionally, muscle contraction. The polypeptide is Myosin heavy chain, embryonic smooth muscle isoform (Oryctolagus cuniculus (Rabbit)).